Here is a 259-residue protein sequence, read N- to C-terminus: Kynurenine formamidase (259 aa).

An HGGXW motif is present at residues 34-38 (HGGAW). Residue Ser-103 is the Nucleophile of the active site. Active-site residues include Asp-196 and His-228.

This sequence belongs to the kynurenine formamidase family. Homodimer.

The catalysed reaction is N-formyl-L-kynurenine + H2O = L-kynurenine + formate + H(+). It functions in the pathway amino-acid degradation; L-tryptophan degradation via kynurenine pathway; L-kynurenine from L-tryptophan: step 2/2. Functionally, catalyzes the hydrolysis of N-formyl-L-kynurenine to L-kynurenine, the second step in the kynurenine pathway of tryptophan degradation. Kynurenine may be further oxidized to nicotinic acid, NAD(H) and NADP(H). Required for elimination of toxic metabolites. This chain is Kynurenine formamidase, found in Meyerozyma guilliermondii (strain ATCC 6260 / CBS 566 / DSM 6381 / JCM 1539 / NBRC 10279 / NRRL Y-324) (Yeast).